Reading from the N-terminus, the 73-residue chain is Large ribosomal subunit protein bL31 (73 aa).

It belongs to the bacterial ribosomal protein bL31 family. Type A subfamily. In terms of assembly, part of the 50S ribosomal subunit.

Its function is as follows. Binds the 23S rRNA. The sequence is that of Large ribosomal subunit protein bL31 from Rhodospirillum centenum (strain ATCC 51521 / SW).